The sequence spans 203 residues: Mitotic spindle checkpoint component mad2 (203 aa).

One can recognise an HORMA domain in the interval 13-197 (KGSSKLVSEF…TSMHKIDCQV (185 aa)).

It belongs to the MAD2 family. Interacts with mad3 and slp1.

The protein resides in the nucleus. In terms of biological role, feedback control that prevents cells with incompletely assembled spindles from leaving mitosis. It interacts with the anaphase promoting complex/cyclosome (APC/C) thereby inhibiting APC/C-dependent proteolysis, a step required for exit from mitosis. This is Mitotic spindle checkpoint component mad2 from Schizosaccharomyces pombe (strain 972 / ATCC 24843) (Fission yeast).